We begin with the raw amino-acid sequence, 24 residues long: Calcium-binding shell glycoprotein P50 (24 aa).

The interval 1 to 24 (KDALEHTGFAPKKDGEEHVEWNYN) is disordered.

Post-translationally, glycosylated. As to expression, nacreous and prismatic layers of the shell.

Calcium-binding. The polypeptide is Calcium-binding shell glycoprotein P50 (Unio pictorum (Painter's mussel)).